Reading from the N-terminus, the 158-residue chain is C-type lectin (158 aa).

The first 23 residues, 1–23 (MGHFTFISLCLMPIFLSLSGAEC), serve as a signal peptide directing secretion. Intrachain disulfides connect C26-C37, C54-C154, C61-C156, and C129-C146. Positions 33-155 (RNGLCYKLFD…CESLFAFICR (123 aa)) constitute a C-type lectin domain. N-linked (GlcNAc...) asparagine glycosylation is found at N111 and N121. Positions 119-121 (EPN) match the Mannose-binding motif. Residues E127, N142, and D143 each coordinate Ca(2+).

Belongs to the true venom lectin family. In terms of assembly, homodimer; non-covalently linked. As to expression, expressed by the venom gland.

It localises to the secreted. Mannose-binding lectin which recognizes specific carbohydrate structures and agglutinates a variety of animal cells by binding to cell-surface glycoproteins and glycolipids. May be a calcium-dependent lectin. The polypeptide is C-type lectin (Micrurus corallinus (Brazilian coral snake)).